Reading from the N-terminus, the 209-residue chain is Peroxynitrite isomerase 2 (209 aa).

Positions 56 to 62 (GVWRGEG) match the GXWXGXG motif. 2 residues coordinate heme b: K172 and H199.

Belongs to the nitrobindin family. Homodimer. The cofactor is heme b.

The enzyme catalyses peroxynitrite = nitrate. It functions in the pathway nitrogen metabolism. Its function is as follows. Heme-binding protein able to scavenge peroxynitrite and to protect free L-tyrosine against peroxynitrite-mediated nitration, by acting as a peroxynitrite isomerase that converts peroxynitrite to nitrate. Therefore, this protein likely plays a role in peroxynitrite sensing and in the detoxification of reactive nitrogen and oxygen species (RNS and ROS, respectively). Is able to bind nitric oxide (NO) in vitro, but may act as a sensor of peroxynitrite levels in vivo. This chain is Peroxynitrite isomerase 2, found in Mycolicibacterium vanbaalenii (strain DSM 7251 / JCM 13017 / BCRC 16820 / KCTC 9966 / NRRL B-24157 / PYR-1) (Mycobacterium vanbaalenii).